The chain runs to 319 residues: Acetyl-coenzyme A carboxylase carboxyl transferase subunit alpha (319 aa).

In terms of domain architecture, CoA carboxyltransferase C-terminal spans 35–292 (EISKLMRRLV…KKTIAEALAE (258 aa)).

Belongs to the AccA family. Acetyl-CoA carboxylase is a heterohexamer composed of biotin carboxyl carrier protein (AccB), biotin carboxylase (AccC) and two subunits each of ACCase subunit alpha (AccA) and ACCase subunit beta (AccD).

Its subcellular location is the cytoplasm. The enzyme catalyses N(6)-carboxybiotinyl-L-lysyl-[protein] + acetyl-CoA = N(6)-biotinyl-L-lysyl-[protein] + malonyl-CoA. Its pathway is lipid metabolism; malonyl-CoA biosynthesis; malonyl-CoA from acetyl-CoA: step 1/1. In terms of biological role, component of the acetyl coenzyme A carboxylase (ACC) complex. First, biotin carboxylase catalyzes the carboxylation of biotin on its carrier protein (BCCP) and then the CO(2) group is transferred by the carboxyltransferase to acetyl-CoA to form malonyl-CoA. In Desulfitobacterium hafniense (strain DSM 10664 / DCB-2), this protein is Acetyl-coenzyme A carboxylase carboxyl transferase subunit alpha.